A 257-amino-acid polypeptide reads, in one-letter code: Imidazole glycerol phosphate synthase subunit HisF (257 aa).

Active-site residues include D11 and D130.

It belongs to the HisA/HisF family. Heterodimer of HisH and HisF.

Its subcellular location is the cytoplasm. The enzyme catalyses 5-[(5-phospho-1-deoxy-D-ribulos-1-ylimino)methylamino]-1-(5-phospho-beta-D-ribosyl)imidazole-4-carboxamide + L-glutamine = D-erythro-1-(imidazol-4-yl)glycerol 3-phosphate + 5-amino-1-(5-phospho-beta-D-ribosyl)imidazole-4-carboxamide + L-glutamate + H(+). The protein operates within amino-acid biosynthesis; L-histidine biosynthesis; L-histidine from 5-phospho-alpha-D-ribose 1-diphosphate: step 5/9. Its function is as follows. IGPS catalyzes the conversion of PRFAR and glutamine to IGP, AICAR and glutamate. The HisF subunit catalyzes the cyclization activity that produces IGP and AICAR from PRFAR using the ammonia provided by the HisH subunit. The protein is Imidazole glycerol phosphate synthase subunit HisF of Shewanella baltica (strain OS223).